The chain runs to 481 residues: Serine/threonine-protein kinase US3 (481 aa).

Positions 12–63 are disordered; it reads RPDKRQEASVPPETNTAPAFPASTFYTPAEDAYLAPGPPETIHPSRPPSPGE. The segment covering 47–61 has biased composition (pro residues); the sequence is PGPPETIHPSRPPSP. The region spanning 191–478 is the Protein kinase domain; sequence FAIHGALIPG…AAELLRLPLF (288 aa). ATP is bound by residues 197–205 and Lys220; that span reads LIPGSEGCV. The active-site Proton acceptor is Asp305.

It belongs to the protein kinase superfamily. Ser/Thr protein kinase family. In terms of assembly, interacts with host LAT; this interaction prevents LAT activation of TRAF6. Post-translationally, phosphorylated by UL13; this phosphorylation regulates subsequent phosphorylation of UL31 and UL34 by US3. Autophosphorylated.

The protein resides in the host cytoplasm. The protein localises to the host nucleus. It carries out the reaction L-seryl-[protein] + ATP = O-phospho-L-seryl-[protein] + ADP + H(+). The catalysed reaction is L-threonyl-[protein] + ATP = O-phospho-L-threonyl-[protein] + ADP + H(+). In terms of biological role, multifunctional serine/threonine kinase that plays a role in several processes including egress of virus particles from the nucleus, modulation of the actin cytoskeleton and inhibition of host immune response. Phosphorylates UL31 and UL34, two critical regulators of capsid budding from nucleus to endoplasmic reticulum, thereby facilitating virion egress. Modulates and redistributes host components of the nuclear envelope, including LMNA, emerin/EMD and the nuclear matrix protein MATR3. In turn, facilitates nuclear pore impairment and capsid release through impaired nuclear envelope. Phosphorylates envelope glycoprotein B (gB), probably to direct it to the cell surface. Promotes virus intracellular spread by restructuring host cell cytoskeleton. Blocks host apoptosis to extend cell survival and allow efficient viral replication. Promotes viral gene expression by phosphorylating host HDAC2 to reduce viral genome silencing. Strongly inhibits TCR-activated signal transduction in T-cells by reducing the ubiquitination of LAT and TRAF6, leading to a suboptimal activation of LAT. Subverts host antiviral innate immunity by inhibiting type I interferon production through hyperphosphorylation of beta-catenin/CTNNB1. In addition, phosphorylates the RNA sensor RIGI and the transcription factor IRF3 to prevent the RLR-mediated antiviral signaling pathway. Hyperphosphorylates host RELA and thereby dampens NF-kappa-B signaling. Acts as an immunoevasin partly responsible for inhibition of MR1 expression and antigen presentation in response to bacterial infection. This is Serine/threonine-protein kinase US3 (US3) from Human herpesvirus 2 (strain HG52) (HHV-2).